The chain runs to 235 residues: 5'-methylthioadenosine/S-adenosylhomocysteine nucleosidase (235 aa).

The Proton acceptor role is filled by glutamate 12. Substrate contacts are provided by residues glycine 78, methionine 153, and methionine 174–glutamate 175. The active-site Proton donor is aspartate 198.

It belongs to the PNP/UDP phosphorylase family. MtnN subfamily.

It carries out the reaction S-adenosyl-L-homocysteine + H2O = S-(5-deoxy-D-ribos-5-yl)-L-homocysteine + adenine. It catalyses the reaction S-methyl-5'-thioadenosine + H2O = 5-(methylsulfanyl)-D-ribose + adenine. The catalysed reaction is 5'-deoxyadenosine + H2O = 5-deoxy-D-ribose + adenine. The protein operates within amino-acid biosynthesis; L-methionine biosynthesis via salvage pathway; S-methyl-5-thio-alpha-D-ribose 1-phosphate from S-methyl-5'-thioadenosine (hydrolase route): step 1/2. In terms of biological role, catalyzes the irreversible cleavage of the glycosidic bond in both 5'-methylthioadenosine (MTA) and S-adenosylhomocysteine (SAH/AdoHcy) to adenine and the corresponding thioribose, 5'-methylthioribose and S-ribosylhomocysteine, respectively. Also cleaves 5'-deoxyadenosine, a toxic by-product of radical S-adenosylmethionine (SAM) enzymes, into 5-deoxyribose and adenine. The polypeptide is 5'-methylthioadenosine/S-adenosylhomocysteine nucleosidase (Pseudoalteromonas translucida (strain TAC 125)).